We begin with the raw amino-acid sequence, 865 residues long: TATA box-binding protein-associated factor RNA polymerase I subunit B (865 aa).

The RRN7-type zinc finger occupies 1–33 (MHSAKNEKCNACGGYRFSVNDGFKYCDRCGALF). The Zn(2+) site is built by Cys9, Cys12, Cys26, and Cys29. The interval 35–99 (NFEELEEEEG…DFLQQQAIKG (65 aa)) is B-reader. Residues 100–111 (EELELPHDATPD) are B-linker. The N-terminal cyclin fold stretch occupies residues 112-348 (YLYRLALRLF…SQPERMKQGE (237 aa)). Residues 233–261 (DEDGDQDAQGGQQLDDLTLETTQNPDESI) form a disordered region. The segment covering 239–248 (DAQGGQQLDD) has biased composition (low complexity). Residues 252 to 261 (ETTQNPDESI) show a composition bias toward polar residues. The interval 349–496 (VVKPTIVDYA…LLTLRLTFQL (148 aa)) is C-terminal cyclin fold.

Belongs to the RRN7/TAF1B family.

The protein resides in the nucleus. It is found in the nucleolus. Component of RNA polymerase I core factor complex that acts as a GTF2B/TFIIB-like factor and plays a key role in multiple steps during transcription initiation such as pre-initiation complex (PIC) assembly and postpolymerase recruitment events in polymerase I (Pol I) transcription. Binds rDNA promoters and plays a role in Pol I recruitment. This Caenorhabditis elegans protein is TATA box-binding protein-associated factor RNA polymerase I subunit B.